The chain runs to 106 residues: MRGNIAQLMQQAQKMQENLQRAQEELAKLEVTGTAGGGMVSVTLTGAKECRKVRIDPSILSDQEMAEDLIAAAFNDASNKIDAESKDRMGSATAGMQLPPGMKLPF.

The span at lysine 80 to methionine 89 shows a compositional bias: basic and acidic residues. The disordered stretch occupies residues lysine 80–phenylalanine 106.

This sequence belongs to the YbaB/EbfC family. As to quaternary structure, homodimer.

It localises to the cytoplasm. The protein resides in the nucleoid. Binds to DNA and alters its conformation. May be involved in regulation of gene expression, nucleoid organization and DNA protection. The protein is Nucleoid-associated protein XAC1110 of Xanthomonas axonopodis pv. citri (strain 306).